The primary structure comprises 66 residues: Alpha-conotoxin RegIIA (66 aa).

Residues 1-21 (MGMRMMFTVFLLVVLTTTVVS) form the signal peptide. Residues 22–49 (STSVRASDGRNAAADNRASDLIAQIVRR) constitute a propeptide that is removed on maturation. 2 cysteine pairs are disulfide-bonded: C51–C57 and C52–C65. The tract at residues 53–55 (SHP) is ser-Xaa-Pro motif, crucial for potent interaction with nAChR. Position 65 is a cysteine amide (C65).

Belongs to the conotoxin A superfamily. Expressed by the venom duct.

The protein localises to the secreted. Its function is as follows. Alpha-conotoxins act on postsynaptic membranes, they bind to the nicotinic acetylcholine receptors (nAChR) and thus inhibit them. This toxin potently inhibits alpha-3 containing subunit nAChR. It inhibits alpha-3-beta-2/CHRNA3-CHRNB2 (IC(50)=10.7-33 nM (rat)/132.4-704.1 nM (human)) and alpha-3-beta-4/CHRNA3-CHRNB4 (IC(50)=47.3-97 nM (rat)/52.1 nM (human)). It also inhibits alpha-7/CHRNA7 nAChR with IC(50)=103-210 nM (human)/41-61.2 nM (rat) nAChRs. It is more potent on alpha-3-beta-2 receptors in human than in rat, due to a variation (Pro vs Gln) in alpha-3 subunit in these orthologs. Conversely, does not show species-specific differences in sensitivity at the alpha-3-beta-4 receptor. This is Alpha-conotoxin RegIIA from Conus regius (Crown cone).